Reading from the N-terminus, the 212-residue chain is Methylthioribulose-1-phosphate dehydratase (212 aa).

The Zn(2+) site is built by histidine 97 and histidine 99.

Belongs to the aldolase class II family. MtnB subfamily. As to quaternary structure, homotetramer. It depends on Zn(2+) as a cofactor.

It carries out the reaction 5-(methylsulfanyl)-D-ribulose 1-phosphate = 5-methylsulfanyl-2,3-dioxopentyl phosphate + H2O. The protein operates within amino-acid biosynthesis; L-methionine biosynthesis via salvage pathway; L-methionine from S-methyl-5-thio-alpha-D-ribose 1-phosphate: step 2/6. Its function is as follows. Catalyzes the dehydration of methylthioribulose-1-phosphate (MTRu-1-P) into 2,3-diketo-5-methylthiopentyl-1-phosphate (DK-MTP-1-P). The polypeptide is Methylthioribulose-1-phosphate dehydratase (Bacillus cytotoxicus (strain DSM 22905 / CIP 110041 / 391-98 / NVH 391-98)).